We begin with the raw amino-acid sequence, 149 residues long: uncharacterized protein (149 aa).

A coiled-coil region spans residues 111–140 (HKALEKATELIENEEELLKREGIKRENLKF).

This is an uncharacterized protein from Aquifex aeolicus (strain VF5).